Consider the following 89-residue polypeptide: Prostaglandin E2 receptor EP3 subtype (89 aa).

The helical transmembrane segment at Gly-1–Gly-18 threads the bilayer. Residues Gln-19–Asn-48 are Extracellular-facing. Asn-38 carries N-linked (GlcNAc...) asparagine glycosylation. The chain crosses the membrane as a helical span at residues Val-49 to Ile-74. Residues Lys-75 to Gln-89 are Cytoplasmic-facing.

Belongs to the G-protein coupled receptor 1 family. In terms of assembly, interacts (via C-terminus) with MKLN1.

The protein localises to the cell membrane. In terms of biological role, receptor for prostaglandin E2 (PGE2). Required for normal development of fever in response to pyrinogens, including IL1B, prostaglandin E2 and bacterial lipopolysaccharide (LPS). Required for normal potentiation of platelet aggregation by prostaglandin E2, and thus plays a role in the regulation of blood coagulation. Required for increased HCO3(-) secretion in the duodenum in response to mucosal acidification, and thereby contributes to the protection of the mucosa against acid-induced ulceration. Not required for normal kidney function, normal urine volume and osmolality. This is Prostaglandin E2 receptor EP3 subtype (PTGER3) from Ovis aries (Sheep).